An 812-amino-acid polypeptide reads, in one-letter code: Eukaryotic translation initiation factor 3 subunit C (812 aa).

The interval 1-110 is disordered; sequence MSRFFSSNYE…EESDEEDGKK (110 aa). Composition is skewed to acidic residues over residues 18 to 30 and 38 to 64; these read SEED…EEDL and SELD…DSDD. 3 positions are modified to phosphoserine: Ser-98, Ser-99, and Ser-103. The PCI domain occupies 608 to 783; the sequence is YHQHINLDLI…TIFVVEKGDE (176 aa).

It belongs to the eIF-3 subunit C family. The eukaryotic translation initiation factor 3 (eIF-3) core complex is composed of TIF32, PRT1, NIP1, TIF34 and TIF35. A subcomplex of TIF32, NIP1 and PRT1 mediates the interaction with eIF-1, TIF5/eIF-5 and HCR1. The factors eIF-1, eIF-2, eIF-3, TIF5/eIF-5 and methionyl-tRNAi form a multifactor complex (MFC) that may bind to the 40S ribosome. TIF32, NIP1 and TIF5/eIF-5 comprise a minimal 40S-ribosome-binding unit. NIP1 interacts with TIF5/eIF-5 and SUI1.

The protein localises to the cytoplasm. Functionally, component of the eukaryotic translation initiation factor 3 (eIF-3) complex, which is involved in protein synthesis of a specialized repertoire of mRNAs and, together with other initiation factors, stimulates binding of mRNA and methionyl-tRNAi to the 40S ribosome. The eIF-3 complex specifically targets and initiates translation of a subset of mRNAs involved in cell proliferation. The protein is Eukaryotic translation initiation factor 3 subunit C of Saccharomyces cerevisiae (strain ATCC 204508 / S288c) (Baker's yeast).